The following is a 154-amino-acid chain: Myoglobin (154 aa).

The region spanning 2-148 (GLSDGEWQLV…FRNDMAAKYK (147 aa)) is the Globin domain. Phosphoserine is present on serine 4. Residue histidine 65 coordinates nitrite. Histidine 65 serves as a coordination point for O2. Threonine 68 is modified (phosphothreonine). Histidine 94 is a binding site for heme b.

Belongs to the globin family. Monomeric.

The protein resides in the cytoplasm. The protein localises to the sarcoplasm. The catalysed reaction is Fe(III)-heme b-[protein] + nitric oxide + H2O = Fe(II)-heme b-[protein] + nitrite + 2 H(+). The enzyme catalyses H2O2 + AH2 = A + 2 H2O. Its function is as follows. Monomeric heme protein which primary function is to store oxygen and facilitate its diffusion within muscle tissues. Reversibly binds oxygen through a pentacoordinated heme iron and enables its timely and efficient release as needed during periods of heightened demand. Depending on the oxidative conditions of tissues and cells, and in addition to its ability to bind oxygen, it also has a nitrite reductase activity whereby it regulates the production of bioactive nitric oxide. Under stress conditions, like hypoxia and anoxia, it also protects cells against reactive oxygen species thanks to its pseudoperoxidase activity. The chain is Myoglobin (MB) from Ochotona princeps (Southern American pika).